The sequence spans 449 residues: Exodeoxyribonuclease 7 large subunit (449 aa).

Belongs to the XseA family. In terms of assembly, heterooligomer composed of large and small subunits.

The protein localises to the cytoplasm. The enzyme catalyses Exonucleolytic cleavage in either 5'- to 3'- or 3'- to 5'-direction to yield nucleoside 5'-phosphates.. Functionally, bidirectionally degrades single-stranded DNA into large acid-insoluble oligonucleotides, which are then degraded further into small acid-soluble oligonucleotides. This Lacticaseibacillus casei (strain BL23) (Lactobacillus casei) protein is Exodeoxyribonuclease 7 large subunit.